The following is a 123-amino-acid chain: Gamma-synuclein (123 aa).

2 consecutive repeat copies span residues 20–30 (EKTKQGVTEAA) and 31–41 (EKTKEGVMYVG). The 4 X 11 AA tandem repeats of [EGSA]-K-T-K-[EQ]-[GQ]-V-X(4) stretch occupies residues 20-67 (EKTKQGVTEAAEKTKEGVMYVGTKTKENVVQSVTSVAEKTKEQANAVS). A 3; approximate repeat occupies 42-56 (TKTKENVVQSVTSVA). Residues 57-67 (EKTKEQANAVS) form repeat 4. Residues Ser-67 and Ser-72 each carry the phosphoserine modification. A disordered region spans residues 91-123 (TTGVVRKEDLEPPAQDQEAKEQEENEEAKSGED). Over residues 107–123 (QEAKEQEENEEAKSGED) the composition is skewed to basic and acidic residues. The residue at position 120 (Ser-120) is a Phosphoserine; by BARK1, CaMK2 and CK2.

Belongs to the synuclein family. As to quaternary structure, may be a centrosome-associated protein. Interacts with MYOC; affects its secretion and its aggregation. In terms of processing, phosphorylated. Phosphorylation by GRK5 appears to occur on residues distinct from the residue phosphorylated by other kinases. As to expression, highly expressed in brain, particularly in the substantia nigra. Also expressed in the corpus callosum, heart, skeletal muscle, ovary, testis, colon and spleen. Weak expression in pancreas, kidney and lung. Expressed predominantly in the cell bodies and axons of primary sensory neurons, sympathetic neurons and motoneurons.

It localises to the cytoplasm. The protein localises to the perinuclear region. The protein resides in the cytoskeleton. Its subcellular location is the microtubule organizing center. It is found in the centrosome. It localises to the spindle. Functionally, plays a role in neurofilament network integrity. May be involved in modulating axonal architecture during development and in the adult. In vitro, increases the susceptibility of neurofilament-H to calcium-dependent proteases. May also function in modulating the keratin network in skin. Activates the MAPK and Elk-1 signal transduction pathway. The chain is Gamma-synuclein (Sncg) from Mus musculus (Mouse).